A 469-amino-acid polypeptide reads, in one-letter code: 3-isopropylmalate dehydratase large subunit (469 aa).

[4Fe-4S] cluster-binding residues include Cys349, Cys410, and Cys413.

Belongs to the aconitase/IPM isomerase family. LeuC type 1 subfamily. As to quaternary structure, heterodimer of LeuC and LeuD. The cofactor is [4Fe-4S] cluster.

The catalysed reaction is (2R,3S)-3-isopropylmalate = (2S)-2-isopropylmalate. It participates in amino-acid biosynthesis; L-leucine biosynthesis; L-leucine from 3-methyl-2-oxobutanoate: step 2/4. In terms of biological role, catalyzes the isomerization between 2-isopropylmalate and 3-isopropylmalate, via the formation of 2-isopropylmaleate. This Neisseria meningitidis serogroup C / serotype 2a (strain ATCC 700532 / DSM 15464 / FAM18) protein is 3-isopropylmalate dehydratase large subunit.